A 90-amino-acid chain; its full sequence is Small ribosomal subunit protein uS15 (90 aa).

It belongs to the universal ribosomal protein uS15 family. As to quaternary structure, part of the 30S ribosomal subunit. Forms a bridge to the 50S subunit in the 70S ribosome, contacting the 23S rRNA.

One of the primary rRNA binding proteins, it binds directly to 16S rRNA where it helps nucleate assembly of the platform of the 30S subunit by binding and bridging several RNA helices of the 16S rRNA. Functionally, forms an intersubunit bridge (bridge B4) with the 23S rRNA of the 50S subunit in the ribosome. This chain is Small ribosomal subunit protein uS15, found in Mycoplasmoides gallisepticum (strain R(low / passage 15 / clone 2)) (Mycoplasma gallisepticum).